The primary structure comprises 156 residues: MSRKGPSKKHVVLPDPIYGSTVVAQLINKILLDGKKSIAEDIVYSALDMVKEKSDQEPVAVLKRALDNIRPSLEVRSRRVGGATYQVPVEVKPNRANTLSLRWLTDFSRARREKTMAERLANEILDASNGLGASVKRREDTHKMAEANKAFAHYRW.

The protein belongs to the universal ribosomal protein uS7 family. Part of the 30S ribosomal subunit. Contacts proteins S9 and S11.

One of the primary rRNA binding proteins, it binds directly to 16S rRNA where it nucleates assembly of the head domain of the 30S subunit. Is located at the subunit interface close to the decoding center, probably blocks exit of the E-site tRNA. In Bifidobacterium longum (strain NCC 2705), this protein is Small ribosomal subunit protein uS7.